The primary structure comprises 414 residues: ZP domain-containing protein (414 aa).

The first 17 residues, 1 to 17, serve as a signal peptide directing secretion; it reads MFLYSFVFLMLLGLSSA. The segment at 18-65 is disordered; the sequence is QTESATSPDEVETEPTMSTDQPETSPSMSTETEPTTETPPVTTPPPPD. At 18-364 the chain is on the extracellular side; sequence QTESATSPDE…GAQEAVSSLT (347 aa). A compositionally biased stretch (low complexity) spans 39–57; it reads PETSPSMSTETEPTTETPP. Residues 70–323 form the ZP domain; it reads ICTNEKMEVF…SRCAKGCETS (254 aa). A disulfide bridge connects residues cysteine 241 and cysteine 302. A helical membrane pass occupies residues 365 to 385; sequence IFAAVAGVLGVIVLFLAVALV. Residues 386–414 are Cytoplasmic-facing; that stretch reads MLYKRYRSPQSATRVVYTKTANEEGKLLV.

Component of the acid-insoluble and acid-soluble organic matrix of the aragonitic skeleton (at protein level).

It is found in the membrane. The sequence is that of ZP domain-containing protein from Acropora millepora (Staghorn coral).